Reading from the N-terminus, the 353-residue chain is MTIAVGKFTKDEKDLFDSMDDWLRRDRFVFVGWSGLLLFPCAYFALGGWFTGTTFVTSWYTHGLASSYLEGCNFLTAAVSTPANSLAHSLLLLWGPEAQGDFTRWCQLGGLWAFVALHGAFALIGFMLRQFELARSVQLRPYNAIAFSGPIAVFVSVFLIYPLGQSGWFFAPSFGVAAIFRFILFFQGFHNWTLNPFHMMGVAGVLGAALLCAIHGATVENTLFEDGDGANTFRAFNPTQAEETYSMVTANRFWSQIFGVAFSNKRWLHFFMLFVPVTGLWMSALGVVGLALNLRAYDFVSQEIRAAEDPEFETFYTKNILLNEGIRAWMAAQDQPHENLIFPEEVLPRGNAL.

N-acetylthreonine is present on Thr2. Thr2 bears the Phosphothreonine mark. Residues 41–61 form a helical membrane-spanning segment; that stretch reads CAYFALGGWFTGTTFVTSWYT. His118 is a binding site for chlorophyll a. The chain crosses the membrane as a helical span at residues 125 to 141; the sequence is GFMLRQFELARSVQLRP. Residues Gln130 and Asn143 each coordinate pheophytin a. A helical membrane pass occupies residues 153-166; sequence VFVSVFLIYPLGQS. Chlorophyll a is bound at residue His198. Residues 208-228 traverse the membrane as a helical segment; it reads AALLCAIHGATVENTLFEDGD. Residues His215 and Phe262 each coordinate a plastoquinone. His215 is a Fe cation binding site. His269 is a binding site for Fe cation. Residues 279–295 form a helical membrane-spanning segment; that stretch reads GLWMSALGVVGLALNLR.

This sequence belongs to the reaction center PufL/M/PsbA/D family. In terms of assembly, PSII is composed of 1 copy each of membrane proteins PsbA, PsbB, PsbC, PsbD, PsbE, PsbF, PsbH, PsbI, PsbJ, PsbK, PsbL, PsbM, PsbT, PsbX, PsbY, PsbZ, Psb30/Ycf12, at least 3 peripheral proteins of the oxygen-evolving complex and a large number of cofactors. It forms dimeric complexes. Requires The D1/D2 heterodimer binds P680, chlorophylls that are the primary electron donor of PSII, and subsequent electron acceptors. It shares a non-heme iron and each subunit binds pheophytin, quinone, additional chlorophylls, carotenoids and lipids. There is also a Cl(-1) ion associated with D1 and D2, which is required for oxygen evolution. The PSII complex binds additional chlorophylls, carotenoids and specific lipids. as cofactor.

The protein resides in the plastid. It is found in the chloroplast thylakoid membrane. The catalysed reaction is 2 a plastoquinone + 4 hnu + 2 H2O = 2 a plastoquinol + O2. In terms of biological role, photosystem II (PSII) is a light-driven water:plastoquinone oxidoreductase that uses light energy to abstract electrons from H(2)O, generating O(2) and a proton gradient subsequently used for ATP formation. It consists of a core antenna complex that captures photons, and an electron transfer chain that converts photonic excitation into a charge separation. The D1/D2 (PsbA/PsbD) reaction center heterodimer binds P680, the primary electron donor of PSII as well as several subsequent electron acceptors. D2 is needed for assembly of a stable PSII complex. The protein is Photosystem II D2 protein of Spinacia oleracea (Spinach).